We begin with the raw amino-acid sequence, 376 residues long: Thymidine kinase (376 aa).

The segment at 1 to 44 (MASYPGHQHASAFDQAARSRGHSNRRTALRPRRQQEATEVRPEQ) is disordered. The segment covering 19-32 (SRGHSNRRTALRPR) has biased composition (basic residues). Residues 33–44 (RQQEATEVRPEQ) are compositionally biased toward basic and acidic residues. 56–63 (GPHGMGKT) contributes to the ATP binding site. Glu83 functions as the Proton acceptor in the catalytic mechanism. 2 residues coordinate substrate: Tyr101 and Gln125. Arg216 serves as a coordination point for ATP. Arg222 contributes to the substrate binding site. The tract at residues 260–280 (GQLSGTAVPPQGAEPQSNAGP) is disordered.

Belongs to the herpesviridae thymidine kinase family. As to quaternary structure, homodimer.

The enzyme catalyses thymidine + ATP = dTMP + ADP + H(+). Catalyzes the transfer of the gamma-phospho group of ATP to thymidine to generate dTMP in the salvage pathway of pyrimidine synthesis. The dTMP serves as a substrate for DNA polymerase during viral DNA replication. Allows the virus to be reactivated and to grow in non-proliferative cells lacking a high concentration of phosphorylated nucleic acid precursors. This Human herpesvirus 1 (strain SC16) (HHV-1) protein is Thymidine kinase.